Consider the following 126-residue polypeptide: Large ribosomal subunit protein bL17 (126 aa).

Belongs to the bacterial ribosomal protein bL17 family. In terms of assembly, part of the 50S ribosomal subunit. Contacts protein L32.

The protein is Large ribosomal subunit protein bL17 of Lactococcus lactis subsp. lactis (strain IL1403) (Streptococcus lactis).